The chain runs to 165 residues: Photosystem I assembly protein Ycf3 (165 aa).

TPR repeat units follow at residues A32–P65, S69–L102, and G117–N150.

It belongs to the Ycf3 family.

It localises to the plastid. The protein resides in the chloroplast thylakoid membrane. Its function is as follows. Essential for the assembly of the photosystem I (PSI) complex. May act as a chaperone-like factor to guide the assembly of the PSI subunits. The polypeptide is Photosystem I assembly protein Ycf3 (Spinacia oleracea (Spinach)).